A 562-amino-acid polypeptide reads, in one-letter code: MLPLPSLRRSLLSHAWRGAGLRWKHTSSLKVTNEPILAFSQGSPERDALQKALKDLKGQMEAIPCVVGDEEVWTSDIQYQLSPFNHAHKVAKFCYADKALLNRAIDAALAARKEWDLKPMADRAQVFLKAADMLSGPRRAEVLAKTMVGQGKTVIQAEIDAAAELIDFFRFNAKFAVELEGEQPISVPPSTNHTVYRGLEGFVAAISPFNFTAIGGNLAGAPALMGNVVLWKPSDTAMLASYAVYRILREAGLPPNIIQFVPADGPTFGDTVTSSEHLCGINFTGSVPTFKHLWRQVAQNLDRFRTFPRLAGECGGKNFHFVHSSADVDSVVSGTLRSAFEYGGQKCSACSRLYVPKSLWPQIKGRLLEEHSRIKVGDPAEDFGTFFSAVIDAKAFARIKKWLEHARSSPSLSILAGGQCNESVGYYVEPCIIESKDPQEPIMKEEIFGPVLTVYVYPDDKYRETLQLVDSTTSYGLTGAVFAQDKAIVQEATRMLRNAAGNFYINDKSTGSVVGQQPFGGARASGTNDKPGGPHYILRWTSPQVIKETHKPLGDWRYSYMQ.

Residues 1–23 (MLPLPSLRRSLLSHAWRGAGLRW) constitute a mitochondrion transit peptide. Lys30 carries the N6-succinyllysine modification. Ser43 carries the phosphoserine modification. Lys51 is subject to N6-acetyllysine. Lys92, Lys98, Lys113, Lys129, and Lys174 each carry N6-acetyllysine; alternate. N6-succinyllysine; alternate is present on residues Lys92, Lys98, Lys113, Lys129, and Lys174. Residues Ser207, Lys232, and 285 to 289 (GSVPT) contribute to the NAD(+) site. Glu313 (proton acceptor) is an active-site residue. Lys317 carries the post-translational modification N6-acetyllysine. Residue Lys346 is modified to N6-succinyllysine. Cys347 (nucleophile) is an active-site residue. An N6-acetyllysine; alternate modification is found at Lys357. Position 357 is an N6-succinyllysine; alternate (Lys357). Residues Lys364 and Lys375 each carry the N6-acetyllysine modification. Residue Lys394 is modified to N6-succinyllysine. Glu446 lines the NAD(+) pocket. Lys461 carries the post-translational modification N6-acetyllysine. Lys508 is modified (N6-acetyllysine; alternate). Lys508 carries the post-translational modification N6-succinyllysine; alternate. Residue Ser512 participates in substrate binding. Lys530 and Lys551 each carry N6-acetyllysine.

It belongs to the aldehyde dehydrogenase family. As to quaternary structure, homodimer. Acetylation of Lys-98, Lys-113 and Lys-401 is observed in liver mitochondria from fasted mice but not from fed mice.

Its subcellular location is the mitochondrion matrix. The catalysed reaction is L-glutamate 5-semialdehyde + NAD(+) + H2O = L-glutamate + NADH + 2 H(+). It participates in amino-acid degradation; L-proline degradation into L-glutamate; L-glutamate from L-proline: step 2/2. Functionally, irreversible conversion of delta-1-pyrroline-5-carboxylate (P5C), derived either from proline or ornithine, to glutamate. This is a necessary step in the pathway interconnecting the urea and tricarboxylic acid cycles. The preferred substrate is glutamic gamma-semialdehyde, other substrates include succinic, glutaric and adipic semialdehydes. The protein is Delta-1-pyrroline-5-carboxylate dehydrogenase, mitochondrial (Aldh4a1) of Mus musculus (Mouse).